Reading from the N-terminus, the 75-residue chain is Sec-independent protein translocase protein TatA (75 aa).

Residues 1–21 (MGSFSIWHWLIVLVIVALVFG) form a helical membrane-spanning segment. Residues 44-75 (KDANSDKPAEQVTQQKVADDTIDVQAKEKTNS) form a disordered region.

Belongs to the TatA/E family. In terms of assembly, the Tat system comprises two distinct complexes: a TatABC complex, containing multiple copies of TatA, TatB and TatC subunits, and a separate TatA complex, containing only TatA subunits. Substrates initially bind to the TatABC complex, which probably triggers association of the separate TatA complex to form the active translocon.

It localises to the cell inner membrane. In terms of biological role, part of the twin-arginine translocation (Tat) system that transports large folded proteins containing a characteristic twin-arginine motif in their signal peptide across membranes. TatA could form the protein-conducting channel of the Tat system. The chain is Sec-independent protein translocase protein TatA from Bordetella petrii (strain ATCC BAA-461 / DSM 12804 / CCUG 43448).